A 211-amino-acid chain; its full sequence is Proteasome subunit beta (211 aa).

Residues 1 to 8 (MNQTLETG) constitute a propeptide, removed in mature form; by autocatalysis. T9 (nucleophile) is an active-site residue.

Belongs to the peptidase T1B family. The 20S proteasome core is composed of 14 alpha and 14 beta subunits that assemble into four stacked heptameric rings, resulting in a barrel-shaped structure. The two inner rings, each composed of seven catalytic beta subunits, are sandwiched by two outer rings, each composed of seven alpha subunits. The catalytic chamber with the active sites is on the inside of the barrel. Has a gated structure, the ends of the cylinder being occluded by the N-termini of the alpha-subunits. Is capped at one or both ends by the proteasome regulatory ATPase, PAN.

Its subcellular location is the cytoplasm. It carries out the reaction Cleavage of peptide bonds with very broad specificity.. The formation of the proteasomal ATPase PAN-20S proteasome complex, via the docking of the C-termini of PAN into the intersubunit pockets in the alpha-rings, triggers opening of the gate for substrate entry. Interconversion between the open-gate and close-gate conformations leads to a dynamic regulation of the 20S proteasome proteolysis activity. Its function is as follows. Component of the proteasome core, a large protease complex with broad specificity involved in protein degradation. The T.acidophilum proteasome is able to cleave oligopeptides after Tyr, Leu, Phe, and to a lesser extent after Glu and Arg. Thus, displays chymotrypsin-like activity and low level of caspase-like and trypsin-like activities. The chain is Proteasome subunit beta from Thermoplasma acidophilum (strain ATCC 25905 / DSM 1728 / JCM 9062 / NBRC 15155 / AMRC-C165).